The primary structure comprises 78 residues: Serine--glyoxylate aminotransferase (78 aa).

The protein belongs to the class-V pyridoxal-phosphate-dependent aminotransferase family. Homodimer. It depends on pyridoxal 5'-phosphate as a cofactor. In terms of tissue distribution, expressed in leaves but not in root tissue or seedlings.

The protein resides in the peroxisome. The enzyme catalyses glyoxylate + L-serine = 3-hydroxypyruvate + glycine. It catalyses the reaction glyoxylate + L-alanine = glycine + pyruvate. Its activity is regulated as follows. Inhibited by aminooxyacetate. This is Serine--glyoxylate aminotransferase from Triticum aestivum (Wheat).